A 161-amino-acid polypeptide reads, in one-letter code: Phosphopantetheine adenylyltransferase (161 aa).

Ser-8 contributes to the substrate binding site. ATP is bound by residues 8-9 (SF) and His-16. Substrate contacts are provided by residues 36–40 (ENPRK), Leu-72, and Arg-86. Residues 87-89 (GLR), Glu-97, and 122-128 (FSFISSS) each bind ATP. Glu-132 lines the substrate pocket.

Belongs to the bacterial CoaD family. In terms of assembly, homohexamer. Requires Mg(2+) as cofactor.

The protein resides in the cytoplasm. The catalysed reaction is (R)-4'-phosphopantetheine + ATP + H(+) = 3'-dephospho-CoA + diphosphate. It functions in the pathway cofactor biosynthesis; coenzyme A biosynthesis; CoA from (R)-pantothenate: step 4/5. Its function is as follows. Reversibly transfers an adenylyl group from ATP to 4'-phosphopantetheine, yielding dephospho-CoA (dPCoA) and pyrophosphate. The sequence is that of Phosphopantetheine adenylyltransferase from Thermotoga maritima (strain ATCC 43589 / DSM 3109 / JCM 10099 / NBRC 100826 / MSB8).